We begin with the raw amino-acid sequence, 358 residues long: L-tryptophan methyltransferase trpM (358 aa).

The protein belongs to the methyltransferase superfamily.

The catalysed reaction is L-tryptophan + S-adenosyl-L-methionine = N(alpha)-methyl-L-tryptophan + S-adenosyl-L-homocysteine + H(+). It catalyses the reaction N(alpha)-methyl-L-tryptophan + S-adenosyl-L-methionine = N(alpha),N(alpha)-dimethyl-L-tryptophan + S-adenosyl-L-homocysteine + H(+). The enzyme catalyses N(alpha),N(alpha)-dimethyl-L-tryptophan + S-adenosyl-L-methionine = N(alpha),N(alpha),N(alpha)-trimethyl-L-tryptophan + S-adenosyl-L-homocysteine + H(+). Its function is as follows. Methyltransferase that catalyzes iterative L-tryptophan N-methylations to produce L-abrine (N-alpha-methyl-L-tryptophan) and N,N-alpha-dimethyl-L-tryptophan. Also catalyzes a third methylation to yield L-hypaphorine (N,N,N-alpha-trimethyl-L-tryptopan), an agonist of the phytohormone indole-3-acetic acid. Can also N-methylate the non-native amino acid substrate 4-hydroxytryptophan, but the ability to incorporate trpM into a functional psilocybin biosynthesis pathway is indeed thwarted by the inability of the L-tryptophan decarboxylase psiD to use N,N-dimethyl-4-hydroxytryptophan as substrate. This is L-tryptophan methyltransferase trpM from Psilocybe serbica.